Consider the following 513-residue polypeptide: Putative fucosyltransferase-like protein (513 aa).

The interval 1–34 (MGVFSNLRGPRAGATHDEFPATNGSPSSSSSPSS) is disordered. At 1 to 39 (MGVFSNLRGPRAGATHDEFPATNGSPSSSSSPSSSIKRK) the chain is on the cytoplasmic side. Low complexity predominate over residues 25–34 (SPSSSSSPSS). Residues 40–60 (LSNLLPLCVALVVIAEIGFLG) traverse the membrane as a helical; Signal-anchor for type II membrane protein segment. The Lumenal portion of the chain corresponds to 61–513 (RLDKVALVDT…PCAKFEVVFV (453 aa)). Asn348 and Asn493 each carry an N-linked (GlcNAc...) asparagine glycan.

This sequence belongs to the glycosyltransferase 10 family.

Its subcellular location is the golgi apparatus. The protein resides in the golgi stack membrane. It functions in the pathway protein modification; protein glycosylation. May be involved in cell wall biosynthesis. May act as a fucosyltransferase. The protein is Putative fucosyltransferase-like protein (FUT12) of Arabidopsis thaliana (Mouse-ear cress).